The primary structure comprises 234 residues: 7-carboxy-7-deazaguanine synthase (234 aa).

The segment at 1–28 (MPLNCDTKTAGEISSSIPSGSGSHQPAA) is disordered. The segment covering 13 to 23 (ISSSIPSGSGS) has biased composition (low complexity). Substrate is bound by residues 42 to 44 (LQG) and Arg57. A Radical SAM core domain is found at 48–234 (TSGYPTIFIR…LQLHKFIGLP (187 aa)). The [4Fe-4S] cluster site is built by Cys61, Cys65, and Cys68. Residue Thr70 participates in Mg(2+) binding. Position 100 (Thr100) interacts with substrate. Position 102 (Gly102) interacts with S-adenosyl-L-methionine. Pro234 serves as a coordination point for substrate.

This sequence belongs to the radical SAM superfamily. 7-carboxy-7-deazaguanine synthase family. As to quaternary structure, homodimer. The cofactor is [4Fe-4S] cluster. Requires S-adenosyl-L-methionine as cofactor. It depends on Mg(2+) as a cofactor.

The enzyme catalyses 6-carboxy-5,6,7,8-tetrahydropterin + H(+) = 7-carboxy-7-deazaguanine + NH4(+). It participates in purine metabolism; 7-cyano-7-deazaguanine biosynthesis. In terms of biological role, catalyzes the complex heterocyclic radical-mediated conversion of 6-carboxy-5,6,7,8-tetrahydropterin (CPH4) to 7-carboxy-7-deazaguanine (CDG), a step common to the biosynthetic pathways of all 7-deazapurine-containing compounds. The protein is 7-carboxy-7-deazaguanine synthase of Methanospirillum hungatei JF-1 (strain ATCC 27890 / DSM 864 / NBRC 100397 / JF-1).